The following is a 264-amino-acid chain: Thymidylate synthase (264 aa).

Residue Arg-21 participates in dUMP binding. His-51 provides a ligand contact to (6R)-5,10-methylene-5,6,7,8-tetrahydrofolate. 126–127 (RR) contributes to the dUMP binding site. The active-site Nucleophile is Cys-146. Residues 166–169 (RSCD), Asn-177, and 207–209 (HLY) contribute to the dUMP site. Asp-169 is a binding site for (6R)-5,10-methylene-5,6,7,8-tetrahydrofolate. A (6R)-5,10-methylene-5,6,7,8-tetrahydrofolate-binding site is contributed by Ala-263.

It belongs to the thymidylate synthase family. Bacterial-type ThyA subfamily. Homodimer.

The protein resides in the cytoplasm. It carries out the reaction dUMP + (6R)-5,10-methylene-5,6,7,8-tetrahydrofolate = 7,8-dihydrofolate + dTMP. Its pathway is pyrimidine metabolism; dTTP biosynthesis. Functionally, catalyzes the reductive methylation of 2'-deoxyuridine-5'-monophosphate (dUMP) to 2'-deoxythymidine-5'-monophosphate (dTMP) while utilizing 5,10-methylenetetrahydrofolate (mTHF) as the methyl donor and reductant in the reaction, yielding dihydrofolate (DHF) as a by-product. This enzymatic reaction provides an intracellular de novo source of dTMP, an essential precursor for DNA biosynthesis. The sequence is that of Thymidylate synthase from Baumannia cicadellinicola subsp. Homalodisca coagulata.